Here is a 338-residue protein sequence, read N- to C-terminus: Large ribosomal subunit protein uL3 (338 aa).

The segment at histidine 230 to glycine 258 is disordered.

This sequence belongs to the universal ribosomal protein uL3 family. In terms of assembly, part of the 50S ribosomal subunit. Forms a cluster with proteins L14 and L24e.

Functionally, one of the primary rRNA binding proteins, it binds directly near the 3'-end of the 23S rRNA, where it nucleates assembly of the 50S subunit. This is Large ribosomal subunit protein uL3 from Pyrobaculum aerophilum (strain ATCC 51768 / DSM 7523 / JCM 9630 / CIP 104966 / NBRC 100827 / IM2).